The primary structure comprises 299 residues: Serpentine receptor class gamma-30 (299 aa).

A run of 7 helical transmembrane segments spans residues 18 to 38 (GIQF…IKVL), 59 to 79 (ILSV…NYIP), 98 to 118 (ILFI…FMVV), 137 to 157 (IIPH…WTAF), 189 to 209 (IISS…MLCI), 223 to 243 (LTAS…MNIY), and 260 to 280 (ALTA…MLCL).

It belongs to the nematode receptor-like protein srg family.

It localises to the membrane. This Caenorhabditis elegans protein is Serpentine receptor class gamma-30 (srg-30).